The sequence spans 309 residues: UDP-N-acetylenolpyruvoylglucosamine reductase (309 aa).

The FAD-binding PCMH-type domain maps to 34–199; the sequence is RVGGPAQVLF…TSARLRGTPA (166 aa). Residue arginine 179 is part of the active site. Serine 228 functions as the Proton donor in the catalytic mechanism. The active site involves glutamate 298.

Belongs to the MurB family. FAD serves as cofactor.

The protein localises to the cytoplasm. It catalyses the reaction UDP-N-acetyl-alpha-D-muramate + NADP(+) = UDP-N-acetyl-3-O-(1-carboxyvinyl)-alpha-D-glucosamine + NADPH + H(+). The protein operates within cell wall biogenesis; peptidoglycan biosynthesis. Its function is as follows. Cell wall formation. In Rhodopseudomonas palustris (strain ATCC BAA-98 / CGA009), this protein is UDP-N-acetylenolpyruvoylglucosamine reductase.